An 868-amino-acid chain; its full sequence is mRNA-capping enzyme (868 aa).

The active-site N6-GMP-lysine intermediate is K282. Residues 594 to 868 enclose the mRNA cap 0 methyltransferase domain; it reads GIYRAQTALI…LFGFICLRKN (275 aa). S-adenosyl-L-methionine contacts are provided by residues K607, G624, D646, and 710–712; that span reads LFI.

It in the N-terminal section; belongs to the dsDNA virus mRNA guanylyltransferase family. This sequence in the C-terminal section; belongs to the class I-like SAM-binding methyltransferase superfamily. mRNA cap 0 methyltransferase family. In terms of assembly, part of the viral DNA-directed RNA polymerase that consists of 8 polII-like subunits (RPB1, RPB2, RPB3, RPB5, RPB6, RPB7, RPB9, RPB10), a capping enzyme and a termination factor.

The protein localises to the virion. It catalyses the reaction a 5'-end triphospho-ribonucleoside in mRNA + H2O = a 5'-end diphospho-ribonucleoside in mRNA + phosphate + H(+). The catalysed reaction is a 5'-end diphospho-ribonucleoside in mRNA + GTP + H(+) = a 5'-end (5'-triphosphoguanosine)-ribonucleoside in mRNA + diphosphate. It carries out the reaction a 5'-end (5'-triphosphoguanosine)-ribonucleoside in mRNA + S-adenosyl-L-methionine = a 5'-end (N(7)-methyl 5'-triphosphoguanosine)-ribonucleoside in mRNA + S-adenosyl-L-homocysteine. It participates in mRNA processing; mRNA capping. In terms of biological role, probably catalyzes the second reaction in the mRNA cap formation pathway. Forms a covalent complex with GTP. In African swine fever virus (isolate Tick/South Africa/Pretoriuskop Pr4/1996) (ASFV), this protein is mRNA-capping enzyme.